We begin with the raw amino-acid sequence, 327 residues long: E3 ubiquitin ligase Rnf121 (327 aa).

Ala2 carries the N-acetylalanine modification. Transmembrane regions (helical) follow at residues 50–70, 79–99, 100–120, 148–168, and 172–192; these read MHAE…LLLV, SYNM…TVKL, HWWR…FVTF, ATGI…NLLF, and PEDA…YGVL. An RING-type; atypical zinc finger spans residues 226–276; the sequence is CAVCGQQIFVDVNEEGIIENTYRLSCNHVFHEFCIRGWCIVGKKQTCPYCK. The helical transmembrane segment at 306–326 threads the bilayer; it reads LVAWQPVIIGLVQGISYILGL.

This sequence belongs to the RNF121 family.

The protein resides in the endoplasmic reticulum membrane. The enzyme catalyses S-ubiquitinyl-[E2 ubiquitin-conjugating enzyme]-L-cysteine + [acceptor protein]-L-lysine = [E2 ubiquitin-conjugating enzyme]-L-cysteine + N(6)-ubiquitinyl-[acceptor protein]-L-lysine.. Its pathway is protein modification; protein ubiquitination. Its function is as follows. E3 ubiquitin ligase which accepts ubiquitin and transfers it to substrates thereby promoting their degradation by the endoplasmic reticulum-associated degradation (ERAD) pathway which is a pathway involved in ubiquitin-dependent degradation of misfolded endoplasmic reticulum proteins. May regulate the unfolded protein response to reduce endoplasmic reticulum stress. The protein is E3 ubiquitin ligase Rnf121 (Rnf121) of Mus musculus (Mouse).